We begin with the raw amino-acid sequence, 342 residues long: UDP-N-acetylglucosamine--N-acetylmuramyl-(pentapeptide) pyrophosphoryl-undecaprenol N-acetylglucosamine transferase (342 aa).

UDP-N-acetyl-alpha-D-glucosamine-binding positions include 10-12, Asn-124, Ser-177, and Gln-275; that span reads TGG.

Belongs to the glycosyltransferase 28 family. MurG subfamily.

It is found in the cell inner membrane. The enzyme catalyses di-trans,octa-cis-undecaprenyl diphospho-N-acetyl-alpha-D-muramoyl-L-alanyl-D-glutamyl-meso-2,6-diaminopimeloyl-D-alanyl-D-alanine + UDP-N-acetyl-alpha-D-glucosamine = di-trans,octa-cis-undecaprenyl diphospho-[N-acetyl-alpha-D-glucosaminyl-(1-&gt;4)]-N-acetyl-alpha-D-muramoyl-L-alanyl-D-glutamyl-meso-2,6-diaminopimeloyl-D-alanyl-D-alanine + UDP + H(+). It functions in the pathway cell wall biogenesis; peptidoglycan biosynthesis. In terms of biological role, cell wall formation. Catalyzes the transfer of a GlcNAc subunit on undecaprenyl-pyrophosphoryl-MurNAc-pentapeptide (lipid intermediate I) to form undecaprenyl-pyrophosphoryl-MurNAc-(pentapeptide)GlcNAc (lipid intermediate II). This is UDP-N-acetylglucosamine--N-acetylmuramyl-(pentapeptide) pyrophosphoryl-undecaprenol N-acetylglucosamine transferase from Campylobacter jejuni subsp. jejuni serotype O:2 (strain ATCC 700819 / NCTC 11168).